The chain runs to 631 residues: E3 ubiquitin-protein ligase Zswim2 (631 aa).

An SWIM-type zinc finger spans residues 54 to 87 (FRVLLGNPHECSCPTFLKRGELCKHICWVLLKKF). The interval 139 to 348 (KDINAGDICP…APGYQCRLCL (210 aa)) is UBE2D1-binding. The RING-type 1 zinc-finger motif lies at 147–199 (CPICQEVLLEKKLPVTFCRFGCGNNVHIKCMRILANYQDTGSDSSVLRCPLCR). A ZZ-type zinc finger spans residues 230–281 (HLGIPCNNCNQLPIEGRCYKCTECVEYHLCQECFDSCCHSSHAFASREKRNQ). Positions 235, 238, 250, 253, 259, 262, 268, and 271 each coordinate Zn(2+). An RING-type 2 zinc finger spans residues 344–386 (CRLCLKSFSFGQYTRLLPCTHKFHRKCIDNWLLHKCNSCPIDR). Residues 589 to 614 (SKRQNNSMGKVRQKLGHPPRRPAYPP) are disordered. Basic residues predominate over residues 599-608 (VRQKLGHPPR).

Dimer. Interacts with UBE2D1. In terms of processing, polyubiquitinated. Polyubiquitination is followed by degradation via the proteasome. As to expression, expressed only in testis.

The enzyme catalyses S-ubiquitinyl-[E2 ubiquitin-conjugating enzyme]-L-cysteine + [acceptor protein]-L-lysine = [E2 ubiquitin-conjugating enzyme]-L-cysteine + N(6)-ubiquitinyl-[acceptor protein]-L-lysine.. In terms of biological role, E3 ubiquitin-protein ligase involved in the regulation of Fas-, DR3- and DR4-mediated apoptosis. Functions in conjunction with the UBE2D1, UBE2D3 and UBE2E1 E2 ubiquitin-conjugating enzymes. The protein is E3 ubiquitin-protein ligase Zswim2 (Zswim2) of Mus musculus (Mouse).